The sequence spans 724 residues: Tripartite terminase subunit 1 (724 aa).

The C3H1-type zinc finger occupies 175-203; that stretch reads CAVCFEELCVTANQGEATHRRLLGCVCDH. Residues 410-445 form a disordered region; that stretch reads GGDDADADGGAAGGADAGDGGVGDEDGPGAPPPADA. Over residues 419 to 430 the composition is skewed to gly residues; that stretch reads GAAGGADAGDGG. 652–659 serves as a coordination point for ATP; that stretch reads FRSVFHCG.

Belongs to the herpesviridae TRM1 protein family. As to quaternary structure, associates with TRM2 and TRM3 to form the tripartite terminase complex. Interacts with portal protein.

It localises to the host nucleus. Component of the molecular motor that translocates viral genomic DNA in empty capsid during DNA packaging. Forms a tripartite terminase complex together with TRM2 and TRM3 in the host cytoplasm. Once the complex reaches the host nucleus, it interacts with the capsid portal vertex. This portal forms a ring in which genomic DNA is translocated into the capsid. TRM1 carries an endonuclease activity that plays an important role for the cleavage of concatemeric viral DNA into unit length genomes. This Suid herpesvirus 1 (strain Indiana-Funkhauser / Becker) (SuHV-1) protein is Tripartite terminase subunit 1.